Reading from the N-terminus, the 376-residue chain is 26S proteasome non-ATPase regulatory subunit 13 (376 aa).

In terms of domain architecture, PCI spans 171–338 (SYYKDALRFL…KRVHMTWVQP (168 aa)). K298 carries the post-translational modification N6-acetyllysine.

Belongs to the proteasome subunit S11 family. As to quaternary structure, component of the 19S proteasome regulatory particle complex. The 26S proteasome consists of a 20S core particle (CP) and two 19S regulatory subunits (RP). The regulatory particle is made of a lid composed of 9 subunits including PSMD13, a base containing 6 ATPases and few additional components.

In terms of biological role, component of the 26S proteasome, a multiprotein complex involved in the ATP-dependent degradation of ubiquitinated proteins. This complex plays a key role in the maintenance of protein homeostasis by removing misfolded or damaged proteins, which could impair cellular functions, and by removing proteins whose functions are no longer required. Therefore, the proteasome participates in numerous cellular processes, including cell cycle progression, apoptosis, or DNA damage repair. In Rattus norvegicus (Rat), this protein is 26S proteasome non-ATPase regulatory subunit 13.